A 382-amino-acid chain; its full sequence is Lipid-A-disaccharide synthase (382 aa).

This sequence belongs to the LpxB family.

The enzyme catalyses 2-N,3-O-bis[(3R)-3-hydroxytetradecanoyl]-alpha-D-glucosaminyl 1-phosphate + UDP-2-N,3-O-bis[(3R)-3-hydroxytetradecanoyl]-alpha-D-glucosamine = lipid A disaccharide (E. coli) + UDP + H(+). It carries out the reaction a lipid X + a UDP-2-N,3-O-bis[(3R)-3-hydroxyacyl]-alpha-D-glucosamine = a lipid A disaccharide + UDP + H(+). It functions in the pathway glycolipid biosynthesis; lipid IV(A) biosynthesis; lipid IV(A) from (3R)-3-hydroxytetradecanoyl-[acyl-carrier-protein] and UDP-N-acetyl-alpha-D-glucosamine: step 5/6. Condensation of UDP-2,3-diacylglucosamine and 2,3-diacylglucosamine-1-phosphate to form lipid A disaccharide, a precursor of lipid A, a phosphorylated glycolipid that anchors the lipopolysaccharide to the outer membrane of the cell. The protein is Lipid-A-disaccharide synthase of Escherichia coli (strain K12 / MC4100 / BW2952).